Here is a 334-residue protein sequence, read N- to C-terminus: DNA-directed RNA polymerase subunit alpha (334 aa).

Residues 1–232 (MVREEIAVST…IDLFIPFLHA (232 aa)) are alpha N-terminal domain (alpha-NTD). Residues 268 to 334 (GIALKCIFID…ILQKHFTIDC (67 aa)) form an alpha C-terminal domain (alpha-CTD) region.

The protein belongs to the RNA polymerase alpha chain family. In plastids the minimal PEP RNA polymerase catalytic core is composed of four subunits: alpha, beta, beta', and beta''. When a (nuclear-encoded) sigma factor is associated with the core the holoenzyme is formed, which can initiate transcription.

It is found in the plastid. Its subcellular location is the chloroplast. It carries out the reaction RNA(n) + a ribonucleoside 5'-triphosphate = RNA(n+1) + diphosphate. Its function is as follows. DNA-dependent RNA polymerase catalyzes the transcription of DNA into RNA using the four ribonucleoside triphosphates as substrates. The polypeptide is DNA-directed RNA polymerase subunit alpha (Chloranthus spicatus (Chulantree)).